Consider the following 435-residue polypeptide: MSLRSSYSVRSSTSQVPVSQMSQMSQMSIKRTTNVPTYRAARSTAAAGQGTRISSASYSGVRSGVGLPSMSSSIHVSATGATGDIMGNEKMAMQNLNDRLASYLRSETLEQANSKLELKIREALEKKGPEVCDYSRFQPIIDDLRRKIFDATSNNARLVLQIDNARLAADDFRVKYDSELSIRQGVEADIAGLRKVIDDTNMNRMNLESEIEALKEELIFLKKNHDNEVMELRNQISHSGVQVDVDAPKGQDLAKIMEEIRSKYEKMALKNQEELKAWHESQITEVQVQVIQNTEALEGARTEVNELRRQIQTLEIELESQRNLKGSLEATLRDTEMRYNMEIESLNAVTMQLEAELTQLRNNIQHQTQEYEALLNLKMKLEAEIATYRRLLDGGDFKLQDALEEQKRVKVMTVTQTLVDGKVVSSSTETKEKKF.

Positions 1–28 (MSLRSSYSVRSSTSQVPVSQMSQMSQMS) are enriched in low complexity. Positions 1 to 36 (MSLRSSYSVRSSTSQVPVSQMSQMSQMSIKRTTNVP) are disordered. The segment at 2 to 88 (SLRSSYSVRS…TGATGDIMGN (87 aa)) is head. The coil 1A stretch occupies residues 89–123 (EKMAMQNLNDRLASYLRSETLEQANSKLELKIREA). Residues 89-399 (EKMAMQNLND…RLLDGGDFKL (311 aa)) enclose the IF rod domain. Positions 124–140 (LEKKGPEVCDYSRFQPI) are linker 1. Residues 141-232 (IDDLRRKIFD…KNHDNEVMEL (92 aa)) are coil 1B. Residues 233-256 (RNQISHSGVQVDVDAPKGQDLAKI) form a linker 12 region. Residues 257–394 (MEEIRSKYEK…IATYRRLLDG (138 aa)) form a coil 2 region. The tail stretch occupies residues 395–435 (GDFKLQDALEEQKRVKVMTVTQTLVDGKVVSSSTETKEKKF).

This sequence belongs to the intermediate filament family. In terms of assembly, heterotetramer of two type I and two type II keratins. Keratin-18 associates with keratin-8. Phosphorylated. Post-translationally, proteolytically cleaved by caspases during epithelial cell apoptosis. Abundantly expressed in an even distribution throughout the optic nerve, localizing specifically to the astrocyte domains. Moderately expressed in spinal cord, brain, liver and oocytes.

Its function is as follows. When phosphorylated, plays a role in filament reorganization. The protein is Keratin, type I cytoskeletal 18 (krt18) of Carassius auratus (Goldfish).